A 119-amino-acid polypeptide reads, in one-letter code: Beta-2-microglobulin (119 aa).

An N-terminal signal peptide occupies residues 1–20 (MARFVAVALLVLLSLSGLEA). One can recognise an Ig-like C1-type domain in the interval 25-114 (PKIQVYSRHP…VTFSTPKTVK (90 aa)). Cysteines 45 and 100 form a disulfide.

It belongs to the beta-2-microglobulin family. In terms of assembly, heterodimer of an alpha chain and a beta chain. Beta-2-microglobulin is the beta-chain of major histocompatibility complex class I molecules.

The protein localises to the secreted. Component of the class I major histocompatibility complex (MHC). Involved in the presentation of peptide antigens to the immune system. The polypeptide is Beta-2-microglobulin (B2M) (Plecturocebus moloch (Dusky titi monkey)).